A 790-amino-acid polypeptide reads, in one-letter code: Lon protease (790 aa).

The Lon N-terminal domain occupies 23 to 220 (LPIMPIFHTV…EITLIVNHQL (198 aa)). An ATP-binding site is contributed by 372–379 (GPPGTGKT). The Lon proteolytic domain occupies 608-789 (ISKPGIAMGL…REVLNIALSR (182 aa)). Active-site residues include serine 695 and lysine 738.

This sequence belongs to the peptidase S16 family. As to quaternary structure, homohexamer. Organized in a ring with a central cavity.

It is found in the cytoplasm. It carries out the reaction Hydrolysis of proteins in presence of ATP.. ATP-dependent serine protease that mediates the selective degradation of mutant and abnormal proteins as well as certain short-lived regulatory proteins. Required for cellular homeostasis and for survival from DNA damage and developmental changes induced by stress. Degrades polypeptides processively to yield small peptide fragments that are 5 to 10 amino acids long. Binds to DNA in a double-stranded, site-specific manner. The polypeptide is Lon protease (Syntrophus aciditrophicus (strain SB)).